The primary structure comprises 273 residues: Homeobox protein ceh-43 (273 aa).

2 disordered regions span residues 47-79 (NGAT…EEAF) and 153-204 (RRSK…LVSS). The homeobox DNA-binding region spans 102–161 (MRKPRTIYNSSQLQMLQKKFQKTQYLALPDRAALAHELGLSQTQVKIWFQNRRSKQKKQK).

It belongs to the distal-less homeobox family. As to expression, predominantly expressed in the head hypdodermis, neuronal support cells and CAN neurons.

The protein localises to the nucleus. Probable transcription factor. Binds to the sequence motif 5'-ATAAT-3' in regulatory elements. Required for development of the anterior hypodermis during embryonic morphogenesis for cell adhesion; also affects embryonic and larval viability. Modulates and maintains dopaminergic neuron differentiation. May activate dopamine pathway genes in concert with ETS domain-containing protein ast-1, and homeobox proteins ceh-40 and ceh-20. The chain is Homeobox protein ceh-43 (ceh-43) from Caenorhabditis elegans.